The sequence spans 384 residues: 2-deoxy-scyllo-inosose synthase (384 aa).

NAD(+) contacts are provided by residues Asp42, Glu73–Lys76, Gly105–Asn109, Thr129–Thr130, Ser140–Lys142, and Lys151–Asn152. Lys142 is a catalytic residue. Residue Glu184 participates in Co(2+) binding. The active site involves Glu244. Residues His247 and His263 each coordinate Co(2+).

It belongs to the sugar phosphate cyclases superfamily. DOI synthase family. Requires NAD(+) as cofactor. Co(2+) is required as a cofactor.

It catalyses the reaction D-glucose 6-phosphate = 2-deoxy-L-scyllo-inosose + phosphate. The protein operates within metabolic intermediate biosynthesis; 2-deoxystreptamine biosynthesis; 2-deoxystreptamine from D-glucose 6-phosphate: step 1/4. It participates in antibiotic biosynthesis; lividomycin biosynthesis. In terms of biological role, catalyzes the intramolecular carbocycle formation from D-glucose-6-phosphate to 2-deoxy-scyllo-inosose (DOI). The polypeptide is 2-deoxy-scyllo-inosose synthase (livC) (Streptomyces lividus).